A 460-amino-acid polypeptide reads, in one-letter code: Cysteine--tRNA ligase (460 aa).

Position 28 (cysteine 28) interacts with Zn(2+). Residues 30-40 (MTVYDYCHLGH) carry the 'HIGH' region motif. Zn(2+) contacts are provided by cysteine 209, histidine 234, and glutamate 238. The 'KMSKS' region motif lies at 266-270 (KMSKS). Lysine 269 is an ATP binding site.

It belongs to the class-I aminoacyl-tRNA synthetase family. As to quaternary structure, monomer. Requires Zn(2+) as cofactor.

The protein localises to the cytoplasm. The enzyme catalyses tRNA(Cys) + L-cysteine + ATP = L-cysteinyl-tRNA(Cys) + AMP + diphosphate. The chain is Cysteine--tRNA ligase from Pseudomonas aeruginosa (strain UCBPP-PA14).